Here is a 230-residue protein sequence, read N- to C-terminus: Tol-Pal system protein TolQ (230 aa).

The next 3 helical transmembrane spans lie at 16–36, 139–159, and 171–191; these read LVKLIMLILIGFSIASWAIII, YIGLFGTVWGIMHAFIALGAV, and IAEALIATAIGLFAAIPAVMA.

Belongs to the ExbB/TolQ family. In terms of assembly, the Tol-Pal system is composed of five core proteins: the inner membrane proteins TolA, TolQ and TolR, the periplasmic protein TolB and the outer membrane protein Pal. They form a network linking the inner and outer membranes and the peptidoglycan layer.

The protein localises to the cell inner membrane. In terms of biological role, part of the Tol-Pal system, which plays a role in outer membrane invagination during cell division and is important for maintaining outer membrane integrity. Required, with TolR, for the proton motive force-dependent activation of TolA and for TolA-Pal interaction. The polypeptide is Tol-Pal system protein TolQ (Escherichia coli O157:H7).